Reading from the N-terminus, the 399-residue chain is Guanine nucleotide-binding protein G(f) subunit alpha (399 aa).

In terms of domain architecture, G-alpha spans 46-399 (TTVKILLLGT…SENVSSMGLF (354 aa)). The segment at 49–62 (KILLLGTAESGKTT) is G1 motif. Residues 54-61 (GTAESGKT), 188-194 (LHSRKIT), 221-225 (DVGGQ), 290-293 (NKYD), and A371 contribute to the GTP site. Residues 186 to 194 (DILHSRKIT) form a G2 motif region. T194 provides a ligand contact to Mg(2+). The segment at 217-226 (FQMYDVGGQR) is G3 motif. The G4 motif stretch occupies residues 286–293 (IVFLNKYD). Residues 369-374 (TVATDT) form a G5 motif region.

This sequence belongs to the G-alpha family. In terms of assembly, g proteins are composed of 3 units; alpha, beta and gamma. The alpha chain contains the guanine nucleotide binding site. In terms of tissue distribution, during embryogenesis, expressed primarily in the developing gut and transiently in the amnioserosa.

Functionally, guanine nucleotide-binding proteins (G proteins) are involved as modulators or transducers in various transmembrane signaling systems. The chain is Guanine nucleotide-binding protein G(f) subunit alpha (Galphaf) from Drosophila melanogaster (Fruit fly).